Consider the following 233-residue polypeptide: uncharacterized protein (233 aa).

This sequence belongs to the asfivirus H233R family.

This is an uncharacterized protein from African swine fever virus (isolate Warthog/Namibia/Wart80/1980) (ASFV).